A 67-amino-acid chain; its full sequence is ATP synthase F(0) complex subunit 8 (67 aa).

Residues 8–24 (TWLIMISSMILTLFITF) form a helical membrane-spanning segment. K54 is modified (N6-acetyllysine; alternate). K54 is modified (N6-succinyllysine; alternate). K57 bears the N6-acetyllysine mark.

Belongs to the ATPase protein 8 family. In terms of assembly, component of the ATP synthase complex composed at least of ATP5F1A/subunit alpha, ATP5F1B/subunit beta, ATP5MC1/subunit c (homooctomer), MT-ATP6/subunit a, MT-ATP8/subunit 8, ATP5ME/subunit e, ATP5MF/subunit f, ATP5MG/subunit g, ATP5MK/subunit k, ATP5MJ/subunit j, ATP5F1C/subunit gamma, ATP5F1D/subunit delta, ATP5F1E/subunit epsilon, ATP5PF/subunit F6, ATP5PB/subunit b, ATP5PD/subunit d, ATP5PO/subunit OSCP. ATP synthase complex consists of a soluble F(1) head domain (subunits alpha(3) and beta(3)) - the catalytic core - and a membrane F(0) domain - the membrane proton channel (subunits c, a, 8, e, f, g, k and j). These two domains are linked by a central stalk (subunits gamma, delta, and epsilon) rotating inside the F1 region and a stationary peripheral stalk (subunits F6, b, d, and OSCP). Interacts with PRICKLE3.

It localises to the mitochondrion membrane. Its function is as follows. Subunit 8, of the mitochondrial membrane ATP synthase complex (F(1)F(0) ATP synthase or Complex V) that produces ATP from ADP in the presence of a proton gradient across the membrane which is generated by electron transport complexes of the respiratory chain. ATP synthase complex consist of a soluble F(1) head domain - the catalytic core - and a membrane F(1) domain - the membrane proton channel. These two domains are linked by a central stalk rotating inside the F(1) region and a stationary peripheral stalk. During catalysis, ATP synthesis in the catalytic domain of F(1) is coupled via a rotary mechanism of the central stalk subunits to proton translocation. In vivo, can only synthesize ATP although its ATP hydrolase activity can be activated artificially in vitro. Part of the complex F(0) domain. In Halichoerus grypus (Gray seal), this protein is ATP synthase F(0) complex subunit 8.